The following is a 391-amino-acid chain: Autophagy-related protein 18d (391 aa).

The segment at 1–24 (MDPRRNFQPGGYDSRNTFTSGSFG) is disordered. WD repeat units follow at residues 31 to 69 (SDEA…ETFR), 74 to 118 (DGGF…CISE), 203 to 243 (AHDS…RLQE), and 248 to 287 (VDRA…IGED).

This sequence belongs to the WD repeat PROPPIN family. Component of the PI(3,5)P2 regulatory complex at least composed of ATG18, SAC/FIG4, FAB1 and VAC14. In terms of tissue distribution, expressed in roots, stems, flowers and leaves.

It localises to the preautophagosomal structure membrane. It is found in the vacuole membrane. The PI(3,5)P2 regulatory complex regulates both the synthesis and turnover of phosphatidylinositol 3,5-bisphosphate (PtdIns(3,5)P2). Required for autophagy. The chain is Autophagy-related protein 18d (ATG18D) from Arabidopsis thaliana (Mouse-ear cress).